Here is a 668-residue protein sequence, read N- to C-terminus: DNA ligase (668 aa).

NAD(+) is bound by residues 31–35, 80–81, and E111; these read DYDFD and SL. K113 acts as the N6-AMP-lysine intermediate in catalysis. 4 residues coordinate NAD(+): R134, E170, K285, and K309. C403, C406, C421, and C427 together coordinate Zn(2+). The 82-residue stretch at 587-668 folds into the BRCT domain; sequence NATEKFIGKT…EFITKLNESE (82 aa).

Belongs to the NAD-dependent DNA ligase family. LigA subfamily. The cofactor is Mg(2+). Mn(2+) serves as cofactor.

The catalysed reaction is NAD(+) + (deoxyribonucleotide)n-3'-hydroxyl + 5'-phospho-(deoxyribonucleotide)m = (deoxyribonucleotide)n+m + AMP + beta-nicotinamide D-nucleotide.. DNA ligase that catalyzes the formation of phosphodiester linkages between 5'-phosphoryl and 3'-hydroxyl groups in double-stranded DNA using NAD as a coenzyme and as the energy source for the reaction. It is essential for DNA replication and repair of damaged DNA. This chain is DNA ligase, found in Flavobacterium johnsoniae (strain ATCC 17061 / DSM 2064 / JCM 8514 / BCRC 14874 / CCUG 350202 / NBRC 14942 / NCIMB 11054 / UW101) (Cytophaga johnsonae).